Consider the following 77-residue polypeptide: U8-lycotoxin-Ls1m (77 aa).

The signal sequence occupies residues 1 to 20; that stretch reads MKLIIFTGLVLFSIVSLIEA. Positions 21–26 are excised as a propeptide; sequence QAENEK.

Belongs to the neurotoxin 19 (CSTX) family. 08 (U8-Lctx) subfamily. Post-translationally, contains 4 disulfide bonds. As to expression, expressed by the venom gland.

The protein localises to the secreted. This Lycosa singoriensis (Wolf spider) protein is U8-lycotoxin-Ls1m.